The chain runs to 62 residues: Photosystem II reaction center protein Z (62 aa).

The next 2 membrane-spanning stretches (helical) occupy residues 8 to 28 (ALIGLVLLSFVLVVGVPVAYA) and 41 to 61 (WVGSAVWIALVFLVGLLNFFV).

This sequence belongs to the PsbZ family. As to quaternary structure, PSII is composed of 1 copy each of membrane proteins PsbA, PsbB, PsbC, PsbD, PsbE, PsbF, PsbH, PsbI, PsbJ, PsbK, PsbL, PsbM, PsbT, PsbX, PsbY, PsbZ, Psb30/Ycf12, peripheral proteins PsbO, CyanoQ (PsbQ), PsbU, PsbV and a large number of cofactors. It forms dimeric complexes.

Its subcellular location is the cellular thylakoid membrane. Functionally, may control the interaction of photosystem II (PSII) cores with the light-harvesting antenna, regulates electron flow through the 2 photosystem reaction centers. PSII is a light-driven water plastoquinone oxidoreductase, using light energy to abstract electrons from H(2)O, generating a proton gradient subsequently used for ATP formation. The chain is Photosystem II reaction center protein Z from Nostoc punctiforme (strain ATCC 29133 / PCC 73102).